The chain runs to 168 residues: Replicase polyprotein 1ab (168 aa).

Residues 1–165 (PNTKSIDGEN…KLLNFGNHLV (165 aa)) form the Nidovirus-type SAM-dependent 2'-O-MTase domain.

Its function is as follows. The replicase polyprotein of coronaviruses is a multifunctional protein: it contains the activities necessary for the transcription of negative stranded RNA, leader RNA, subgenomic mRNAs and progeny virion RNA as well as proteinases responsible for the cleavage of the polyprotein into functional products. This Canine coronavirus (strain Insavc-1) (CCoV) protein is Replicase polyprotein 1ab (rep).